A 252-amino-acid chain; its full sequence is Cell division protein ZapD (252 aa).

It belongs to the ZapD family. As to quaternary structure, interacts with FtsZ.

It localises to the cytoplasm. Its function is as follows. Cell division factor that enhances FtsZ-ring assembly. Directly interacts with FtsZ and promotes bundling of FtsZ protofilaments, with a reduction in FtsZ GTPase activity. This Cupriavidus pinatubonensis (strain JMP 134 / LMG 1197) (Cupriavidus necator (strain JMP 134)) protein is Cell division protein ZapD.